A 218-amino-acid chain; its full sequence is Probable transaldolase (218 aa).

Catalysis depends on K83, which acts as the Schiff-base intermediate with substrate.

This sequence belongs to the transaldolase family. Type 3B subfamily.

The protein localises to the cytoplasm. It catalyses the reaction D-sedoheptulose 7-phosphate + D-glyceraldehyde 3-phosphate = D-erythrose 4-phosphate + beta-D-fructose 6-phosphate. It functions in the pathway carbohydrate degradation; pentose phosphate pathway; D-glyceraldehyde 3-phosphate and beta-D-fructose 6-phosphate from D-ribose 5-phosphate and D-xylulose 5-phosphate (non-oxidative stage): step 2/3. In terms of biological role, transaldolase is important for the balance of metabolites in the pentose-phosphate pathway. The protein is Probable transaldolase of Thermotoga sp. (strain RQ2).